The sequence spans 212 residues: TATA-box-binding protein 2 (212 aa).

A run of 2 repeats spans residues 30 to 114 (THPE…KKIG) and 120 to 201 (SNFN…YPIL).

The protein belongs to the TBP family. Belongs to the TFIID complex together with the TBP-associated factors (TAFs). Binds DNA as monomer.

Its subcellular location is the nucleus. Functionally, general transcription factor that functions at the core of the DNA-binding multiprotein factor TFIID. Binding of TFIID to the TATA box is the initial transcriptional step of the pre-initiation complex (PIC), playing a role in the activation of eukaryotic genes transcribed by RNA polymerase II. This Entamoeba histolytica (strain ATCC 30459 / HM-1:IMSS / ABRM) protein is TATA-box-binding protein 2.